Here is a 531-residue protein sequence, read N- to C-terminus: MATPSSIPAEPKRDVVNRIHRVTRGNRSLWYQMTVLQQPERARACGSGSKANSDRRPVDPPPVVELRIIEGPSVEEGKDITFDYNANFFLYASLEHARPLARGRVNTPAAGNPPILTGVPASGMAYLDRPTEAGYFIFPDLSVRHEGLYILTFSLFETTKEERDFDLEPADGDLPPGVDYRMEIKTDPFSVYSAKKFPGLMESTQLSKTVADQGCPVRIRRDVRMRKRESKPGAGNSNSGGNGFERREEDFGRRRTITPASEDPHSIRNRSHSNSSEQRTPYTDASRRPSMVDAYPPPPPPPPSYEPAPSASRHLDFGDSSAAQYPTPRQYAHQPGLQITPGPPSASYAPTSQSPYSKTDAPYGYVNRNIPPSCPSPAPSLKHELYDRRQSTSTYVPPSPSVYSTEGHHRRDSRPSYPPTPVAAPRPRPMHSQTSLPALKIDQLVSPVSPLPPIEPQTGPAPELPPINVGGKRKHESVFAQSTRPLHNGQRQVDPHYGRSHRGYSPDHDQGWYSRADGQISSVQFNRYYDE.

One can recognise a Velvet domain in the interval 26 to 220; the sequence is NRSLWYQMTV…ADQGCPVRIR (195 aa). The short motif at 40–45 is the Nuclear localization signal element; that stretch reads ERARAC. 2 disordered regions span residues 206-435 and 447-517; these read LSKT…SQTS and PVSP…SRAD. A compositionally biased stretch (basic and acidic residues) spans 244-253; it reads FERREEDFGR. Over residues 295–306 the composition is skewed to pro residues; that stretch reads YPPPPPPPPSYE. Positions 348–357 are enriched in polar residues; it reads YAPTSQSPYS. The segment covering 381–390 has biased composition (basic and acidic residues); that stretch reads LKHELYDRRQ. Residues 391–405 are compositionally biased toward low complexity; that stretch reads STSTYVPPSPSVYST. The span at 416-427 shows a compositional bias: pro residues; the sequence is SYPPTPVAAPRP. Positions 430–461 are PEST; that stretch reads MHSQTSLPALKIDQLVSPVSPLPPIEPQTGPA. Polar residues predominate over residues 479 to 491; it reads FAQSTRPLHNGQR.

This sequence belongs to the velvet family. VeA subfamily. As to quaternary structure, component of the heterotrimeric velvet complex composed of LAE1, VE1 and VELB; VE1 acting as a bridging protein between LAE1 and VELB. Interacts with VELB and VELC.

The protein localises to the nucleus. It is found in the cytoplasm. Functionally, component of the velvet transcription factor complex that controls sexual/asexual developmental ratio in response to light, promoting sexual development in the darkness while stimulating asexual sporulation under illumination. The velvet complex hat acts as a global regulator for secondary metabolite gene expression. Controls the expression of the cycotoxins fumonisins and fusarins gene cluster. Involved in cell wall integrity, cell surface hydrophobicity, hyphal polarity and conidiation pattern. Required for pathogenicity against maize seedlings. Involved in oxidative stress resistance by positively regulating the transcription of the catalase-encoding gene CAT2. This Gibberella moniliformis (strain M3125 / FGSC 7600) (Maize ear and stalk rot fungus) protein is Developmental and secondary metabolism regulator VE1.